A 127-amino-acid polypeptide reads, in one-letter code: MSKLFFCCLILAGSFCSFRSLPIIVPSKGSLRLSESALDFGDLKSWDDETRLLRNLPMFVDKEAERDAEDIFSKEGFGLDAYNMDDKEELFDKHPRISLLSRLQSKDRKQFKKRAGNLSECFWKYCV.

The N-terminal stretch at Met1 to Cys16 is a signal peptide. Positions Ser17–Phe111 are excised as a propeptide. Cys121 and Cys126 are disulfide-bonded.

Belongs to the urotensin-2 family. In terms of tissue distribution, central nervous system. Spinal cord.

The protein resides in the secreted. Functionally, involved in smooth muscle stimulating and ion mobilizing activities. It has a suggested role as a corticotropin-releasing factor. This is Urotensin-2 (UTS2) from Pelophylax ridibundus (Marsh frog).